A 160-amino-acid polypeptide reads, in one-letter code: RNA pyrophosphohydrolase (160 aa).

In terms of domain architecture, Nudix hydrolase spans P10–D154. The short motif at G44–G65 is the Nudix box element.

It belongs to the Nudix hydrolase family. RppH subfamily. It depends on a divalent metal cation as a cofactor.

Functionally, accelerates the degradation of transcripts by removing pyrophosphate from the 5'-end of triphosphorylated RNA, leading to a more labile monophosphorylated state that can stimulate subsequent ribonuclease cleavage. The protein is RNA pyrophosphohydrolase of Roseobacter denitrificans (strain ATCC 33942 / OCh 114) (Erythrobacter sp. (strain OCh 114)).